Reading from the N-terminus, the 388-residue chain is 1-deoxy-D-xylulose 5-phosphate reductoisomerase (388 aa).

The NADPH site is built by Thr10, Gly11, Ser12, Ile13, Lys37, Asn38, and Asn123. Residue Lys124 coordinates 1-deoxy-D-xylulose 5-phosphate. Glu125 lines the NADPH pocket. Asp149 is a binding site for Mn(2+). 1-deoxy-D-xylulose 5-phosphate-binding residues include Ser150, Glu151, Ser175, and His198. Glu151 contributes to the Mn(2+) binding site. Gly204 is a binding site for NADPH. Residues Ser211, Asn216, Lys217, and Glu220 each coordinate 1-deoxy-D-xylulose 5-phosphate. Glu220 lines the Mn(2+) pocket.

Belongs to the DXR family. Mg(2+) serves as cofactor. Mn(2+) is required as a cofactor.

It carries out the reaction 2-C-methyl-D-erythritol 4-phosphate + NADP(+) = 1-deoxy-D-xylulose 5-phosphate + NADPH + H(+). The protein operates within isoprenoid biosynthesis; isopentenyl diphosphate biosynthesis via DXP pathway; isopentenyl diphosphate from 1-deoxy-D-xylulose 5-phosphate: step 1/6. Catalyzes the NADPH-dependent rearrangement and reduction of 1-deoxy-D-xylulose-5-phosphate (DXP) to 2-C-methyl-D-erythritol 4-phosphate (MEP). The polypeptide is 1-deoxy-D-xylulose 5-phosphate reductoisomerase (Pelagibacter ubique (strain HTCC1062)).